A 981-amino-acid polypeptide reads, in one-letter code: MAEGGAADLDTQRSDIATLLKTSLRKGDTWYLVDSRWFKQWKKYVGFDSWDKYQMGDQNVYPGPIDNSGLLKDGDAQSLKEHLIDELDYILLPTEGWNKLVSWYTLMEGQEPIARKVVEQGMFVKHCKVEVYLTELKLCENGNMNNVVTRRFSKADTIDTIEKEIRKIFNIPDEKEARLWNKYMSNTFEPLNKPDSTIQDAGLYQGQVLVIEQKNEDGTWPRGPSTPKSPGASNFSTLPKISPSSLSNNYNNINNRNVKNSNYCLPSYTAYKNYDYSEPGRNNEQPGLCGLSNLGNTCFMNSAIQCLSNTPPLTEYFLNDKYQEELNFDNPLGMRGEIAKSYAELIKQMWSGKFSYVTPRAFKTQVGRFAPQFSGYQQQDCQELLAFLLDGLHEDLNRIRKKPYIQLKDADGRPDKVVAEEAWENHLKRNDSIIVDIFHGLFKSTLVCPECAKISVTFDPFCYLTLPLPMKKERSLEVYLVRMDPLAKPMQYKVIVPKIGNILDLCTALSALSGVPADKMIVTDIYNHRFHRIFAVDENLSSIMERDDIYVFEININRAEDTEHVVIPVCLREKFRHSSYTHHTGSSLFGQPFLMAIPRNNTEDKLYNLLLLRMCRYVKMSTETEETDGHLRCCEDQNINGNGPNGLHEEGSPSEMETDEPDDESSQDQELPSENENSQSEDSVGGDNDSENGLCTEETCKGQLTGHKKRLFTFQFNNLGNNDINYIKDDTSHIRFDDRQLRLDERSFLALDWDPDLKKRYFDENAAEDFEKHESVEYKPPKRPFVKLKDCIELFTTKEKLGAEDPWYCPNCKEHQQATKKLDLWSLPPVLVVHLKRFSYSRYMRDKLDTLVDFPISDLDMSEFLINPNAGPCRYNLIAVSNHYGGMGGGHYTAFAKNKDDGKWYYFDDSSVSTASEDQIVSKAAYVLFYQRQDTFSGTGFFPLDRETKGASAATGIPLESDEDSNDNDNDLENENCMHTN.

An N-acetylalanine modification is found at Ala-2. Positions 2–223 (AEGGAADLDT…KNEDGTWPRG (222 aa)) are mediates interaction with SART3. One can recognise a DUSP domain in the interval 7-118 (ADLDTQRSDI…GQEPIARKVV (112 aa)). A disordered region spans residues 216–237 (EDGTWPRGPSTPKSPGASNFST). A Phosphothreonine modification is found at Thr-226. Positions 226 to 237 (TPKSPGASNFST) are enriched in polar residues. A phosphoserine mark is found at Ser-229 and Ser-242. Residues 289 to 933 (CGLSNLGNTC…AAYVLFYQRQ (645 aa)) form the USP domain. Cys-298 serves as the catalytic Nucleophile. Thr-602 is modified (phosphothreonine). The tract at residues 633–694 (CCEDQNINGN…GGDNDSENGL (62 aa)) is disordered. Acidic residues predominate over residues 656 to 673 (METDEPDDESSQDQELPS). Catalysis depends on His-891, which acts as the Proton acceptor. The tract at residues 952 to 981 (SAATGIPLESDEDSNDNDNDLENENCMHTN) is disordered. Acidic residues predominate over residues 960–974 (ESDEDSNDNDNDLEN). Phosphoserine is present on residues Ser-961 and Ser-965.

Belongs to the peptidase C19 family. A homodimer structure has been reported; however it is unclear whether the protein form a homodimer in vivo. Identified in a complex with the COP9 signalosome complex (CSN). Interacts with SMAD1, SMAD2 and SMAD3; the interaction is direct. Forms a complex with SMURF2 and SMAD7. Interacts with TGFBR1. Interacts with SART3; the interaction is direct. May interact with RNF20 and RNF40. May interact with PRKN. Interacts with INCA1. Phosphorylated. Phosphorylation protects against ubiquitination and subsequent degradation by the proteasome. In terms of processing, ubiquitinated, leading to degradation by the proteasome. As to expression, widely expressed with highest levels in the brain and spleen, and lowest levels in the muscles (at protein level). In the midbrain, strong expression in neurons including the dopaminergic neurons (at protein level). Widely expressed with highest levels in testis, heart and liver.

It is found in the cytoplasm. Its subcellular location is the nucleus. The protein resides in the mitochondrion. The catalysed reaction is Thiol-dependent hydrolysis of ester, thioester, amide, peptide and isopeptide bonds formed by the C-terminal Gly of ubiquitin (a 76-residue protein attached to proteins as an intracellular targeting signal).. Hydrolase that removes conjugated ubiquitin from target proteins and regulates various pathways such as the TGF-beta receptor signaling, NF-kappa-B and RNF41/NRDP1-PRKN pathways. Acts as a key regulator of TGF-beta receptor signaling pathway, but the precise mechanism is still unclear: according to a report, acts by promoting deubiquitination of monoubiquitinated R-SMADs (SMAD1, SMAD2 and/or SMAD3), thereby alleviating inhibition of R-SMADs and promoting activation of TGF-beta target genes. According to another reports, regulates the TGF-beta receptor signaling pathway by mediating deubiquitination and stabilization of TGFBR1, leading to an enhanced TGF-beta signal. Able to mediate deubiquitination of monoubiquitinated substrates, 'Lys-27'-, 'Lys-48'- and 'Lys-63'-linked polyubiquitin chains. May also regulate gene expression and/or DNA repair through the deubiquitination of histone H2B. Acts as an inhibitor of mitophagy by counteracting the action of parkin (PRKN): hydrolyzes cleavage of 'Lys-48'- and 'Lys-63'-linked polyubiquitin chains attached by parkin on target proteins such as MFN2, thereby reducing parkin's ability to drive mitophagy. Acts as an associated component of COP9 signalosome complex (CSN) and regulates different pathways via this association: regulates NF-kappa-B by mediating deubiquitination of NFKBIA and deubiquitinates substrates bound to VCP. Involved in endosome organization by mediating deubiquitination of SQSTM1: ubiquitinated SQSTM1 forms a molecular bridge that restrains cognate vesicles in the perinuclear region and its deubiquitination releases target vesicles for fast transport into the cell periphery. Acts as a negative regulator of antifungal immunity by mediating 'Lys-27'-linked deubiquitination of CARD9, thereby inactivating CARD9. The chain is Ubiquitin carboxyl-terminal hydrolase 15 (Usp15) from Mus musculus (Mouse).